The primary structure comprises 183 residues: ATP synthase subunit delta (183 aa).

It belongs to the ATPase delta chain family. F-type ATPases have 2 components, F(1) - the catalytic core - and F(0) - the membrane proton channel. F(1) has five subunits: alpha(3), beta(3), gamma(1), delta(1), epsilon(1). F(0) has three main subunits: a(1), b(2) and c(10-14). The alpha and beta chains form an alternating ring which encloses part of the gamma chain. F(1) is attached to F(0) by a central stalk formed by the gamma and epsilon chains, while a peripheral stalk is formed by the delta and b chains.

The protein resides in the cell inner membrane. F(1)F(0) ATP synthase produces ATP from ADP in the presence of a proton or sodium gradient. F-type ATPases consist of two structural domains, F(1) containing the extramembraneous catalytic core and F(0) containing the membrane proton channel, linked together by a central stalk and a peripheral stalk. During catalysis, ATP synthesis in the catalytic domain of F(1) is coupled via a rotary mechanism of the central stalk subunits to proton translocation. Functionally, this protein is part of the stalk that links CF(0) to CF(1). It either transmits conformational changes from CF(0) to CF(1) or is implicated in proton conduction. This Syntrophobacter fumaroxidans (strain DSM 10017 / MPOB) protein is ATP synthase subunit delta.